Consider the following 393-residue polypeptide: Serine/threonine-protein phosphatase 2A activator 1 (393 aa).

The disordered stretch occupies residues E328–R393. Polar residues-rich tracts occupy residues E335 to S356 and S365 to F386. Phosphoserine is present on S341.

It belongs to the PTPA-type PPIase family. Interacts with the phosphatase PP2A-like catalytic subunits PPG1, PPH3 and SIT4. Forms a ternary complex with SIT4-TAP42.

It is found in the cytoplasm. The protein localises to the nucleus. It carries out the reaction [protein]-peptidylproline (omega=180) = [protein]-peptidylproline (omega=0). Its function is as follows. PPIases accelerate the folding of proteins. It catalyzes the cis-trans isomerization of proline imidic peptide bonds in oligopeptides. Acts as a regulatory subunit for TAP42-associated PP2A-like phosphatases modulating their activity or substrate specificity, probably by inducing a conformational change in the catalytic subunit, a direct target of the PPIase. Can reactivate inactive phosphatase PP2A-phosphatase methylesterase complexes (PP2Ai) in presence of ATP and Mg(2+) by dissociating the inactive form from the complex. Involved in the regulation of cell cycle progression, mitotic spindle formation, bud morphogenesis and DNA repair. The chain is Serine/threonine-protein phosphatase 2A activator 1 (RRD1) from Saccharomyces cerevisiae (strain ATCC 204508 / S288c) (Baker's yeast).